The following is a 77-amino-acid chain: Putative defensin-like protein 187 (77 aa).

An N-terminal signal peptide occupies residues 1-19; that stretch reads MKNSSIMFVLIVVFLISSS. 3 disulfides stabilise this stretch: cysteine 31–cysteine 77, cysteine 43–cysteine 71, and cysteine 47–cysteine 73.

Belongs to the DEFL family.

It localises to the secreted. The protein is Putative defensin-like protein 187 (LCR42) of Arabidopsis thaliana (Mouse-ear cress).